The primary structure comprises 145 residues: uncharacterized protein (145 aa).

A helical transmembrane segment spans residues 97-117; it reads ISMLLLIVIIAIGLTISYMVI.

It is found in the membrane. This is an uncharacterized protein from Methanocaldococcus jannaschii (strain ATCC 43067 / DSM 2661 / JAL-1 / JCM 10045 / NBRC 100440) (Methanococcus jannaschii).